The sequence spans 258 residues: Protein SseB (258 aa).

Its function is as follows. May be involved in the enhancement of serine-sensitivity. In Escherichia coli (strain K12), this protein is Protein SseB (sseB).